The following is a 585-amino-acid chain: Frizzled-10 (585 aa).

The first 24 residues, 1 to 24, serve as a signal peptide directing secretion; sequence MGPAAGNLVRAVLALCWLAEHCAG. The Extracellular portion of the chain corresponds to 25–229; it reads ISSIDIERPG…DVYWSKDDKQ (205 aa). An FZ domain is found at 33-154; sequence PGDGRCQPIE…NDPNYLCMEA (122 aa). Intrachain disulfides connect cysteine 38/cysteine 99, cysteine 46/cysteine 92, cysteine 83/cysteine 121, cysteine 110/cysteine 151, and cysteine 114/cysteine 138. An N-linked (GlcNAc...) asparagine glycan is attached at asparagine 52. Residues 155 to 195 form a disordered region; that stretch reads PNNGSDEPPRGSSMLPPMFRPQRPSTGHDLQQHKDSLSRTS. N-linked (GlcNAc...) asparagine glycosylation occurs at asparagine 157. A helical transmembrane segment spans residues 230-250; it reads FAVIWIAIWSILCFFSSAFTV. The Cytoplasmic segment spans residues 251–265; that stretch reads LTFLIDPQRFKYPER. Residues 266–286 traverse the membrane as a helical segment; that stretch reads PIIFLSMCYCVYSVGYIIRLF. Over 287 to 314 the chain is Extracellular; sequence SGAESIACDRDSGQLYVIQEGLESTGCT. A helical transmembrane segment spans residues 315 to 335; sequence IVFLVLYYFGMASSLWWVILT. At 336-355 the chain is on the cytoplasmic side; sequence LTWFLAAGKKWGHEAIEANS. The chain crosses the membrane as a helical span at residues 356–376; it reads SYFHLAAWAIPAVKTIMILVM. Residues 377–397 lie on the Extracellular side of the membrane; sequence RRVAGDELTGLCYVGSMDVNA. Residues 398 to 418 traverse the membrane as a helical segment; that stretch reads LTGFVLIPLACYLIIGTSFIL. At 419–447 the chain is on the cytoplasmic side; sequence SGFVALFHIRRVMKTGGENTDKLEKLMVR. Residues 448-468 form a helical membrane-spanning segment; that stretch reads IGVFSVLYTVPATCVIACYFY. Over 469-506 the chain is Extracellular; sequence ERLNMDYWKIVASQQKCKMNNQTKNLDCMMNNSIPAVE. 2 N-linked (GlcNAc...) asparagine glycosylation sites follow: asparagine 489 and asparagine 499. Residues 507–527 traverse the membrane as a helical segment; that stretch reads IFMVKIFMLLVVGITSGMWIW. The Cytoplasmic segment spans residues 528 to 585; sequence TSKTLQSWQNVCSRRLKKRSRRKPASVITSSGIYKKPQHPQKTHLAKYESTLQPPTCV. The Lys-Thr-X-X-X-Trp motif, mediates interaction with the PDZ domain of Dvl family members motif lies at 530–535; sequence KTLQSW. Positions 583-585 match the PDZ-binding motif; that stretch reads TCV.

Belongs to the G-protein coupled receptor Fz/Smo family. In terms of assembly, interacts with WNT7A. In terms of tissue distribution, expressed in the dorsal ectoderm overlying the developing spinal cord.

Its subcellular location is the cell membrane. Functionally, receptor for Wnt proteins. Functions in the canonical Wnt/beta-catenin signaling pathway. Activation by WNT7A induces expression of beta-catenin target genes. The canonical Wnt/beta-catenin signaling pathway leads to the activation of disheveled proteins, inhibition of GSK-3 kinase, nuclear accumulation of beta-catenin and activation of Wnt target genes. A second signaling pathway involving PKC and calcium fluxes has been seen for some family members, but it is not yet clear if it represents a distinct pathway or if it can be integrated in the canonical pathway, as PKC seems to be required for Wnt-mediated inactivation of GSK-3 kinase. Both pathways seem to involve interactions with G-proteins. May be involved in transduction and intercellular transmission of polarity information during tissue morphogenesis and/or in differentiated tissues. The protein is Frizzled-10 (FZD10) of Gallus gallus (Chicken).